A 163-amino-acid chain; its full sequence is Cyclic pyranopterin monophosphate synthase (163 aa).

Substrate contacts are provided by residues 75-77 and 115-116; these read LCH and ME. Asp130 is a catalytic residue.

This sequence belongs to the MoaC family. As to quaternary structure, homohexamer; trimer of dimers.

It carries out the reaction (8S)-3',8-cyclo-7,8-dihydroguanosine 5'-triphosphate = cyclic pyranopterin phosphate + diphosphate. The protein operates within cofactor biosynthesis; molybdopterin biosynthesis. Catalyzes the conversion of (8S)-3',8-cyclo-7,8-dihydroguanosine 5'-triphosphate to cyclic pyranopterin monophosphate (cPMP). The chain is Cyclic pyranopterin monophosphate synthase from Variovorax paradoxus (strain S110).